A 148-amino-acid chain; its full sequence is MPTRFSKHRKSRGDVCAGYGRVGKHRKHPGGRGNAGGLTHHRINFDKYHPGYFGKLGMRHFHLLRNQYHCPTVSLEKIWTLVPESVRKSLAAKNDGTAPVVDVTQKGFFKVLGHGILPTQPIIVKARYFSKVAEKKIKAVGGACILVA.

Positions 18–38 (GYGRVGKHRKHPGGRGNAGGL) are disordered.

The protein belongs to the universal ribosomal protein uL15 family.

This Dictyostelium discoideum (Social amoeba) protein is Large ribosomal subunit protein uL15 (rpl27a).